We begin with the raw amino-acid sequence, 847 residues long: Endo-beta-N-acetylglucosaminidase EndoSd (847 aa).

A signal peptide spans 1–36 (MDKRLLVKRTLGCVCAATLMGAILATHHDSLISVKA). The region spanning 65–377 (PLYAGYFRTW…HPVVDNISHT (313 aa)) is the GH18 domain. His-107 provides a ligand contact to a glycoprotein. Catalysis depends on Glu-186, which acts as the Proton donor. A glycoprotein is bound by residues Glu-188, Gln-250, Tyr-252, Glu-288, Glu-289, Asn-295, and Tyr-339. 4 LRR repeats span residues 423-446 (LERY…LEKL), 447-470 (SHLQ…ILPE), 483-506 (MTGL…DVNG), and 507-530 (LTHL…ADRK). The interval 683 to 836 (MENLAKGAKV…YTELQILGQR (154 aa)) is carbohydrate-binding module (CBM). Ca(2+) contacts are provided by Lys-704, Asp-707, and Glu-829.

It belongs to the glycosyl hydrolase 18 family.

The protein resides in the secreted. It localises to the host extracellular space. The catalysed reaction is an N(4)-(oligosaccharide-(1-&gt;3)-[oligosaccharide-(1-&gt;6)]-beta-D-Man-(1-&gt;4)-beta-D-GlcNAc-(1-&gt;4)-alpha-D-GlcNAc)-L-asparaginyl-[protein] + H2O = an oligosaccharide-(1-&gt;3)-[oligosaccharide-(1-&gt;6)]-beta-D-Man-(1-&gt;4)-D-GlcNAc + N(4)-(N-acetyl-beta-D-glucosaminyl)-L-asparaginyl-[protein]. Its function is as follows. Endoglucosidase that acts as a host immune evasion factor by mediating hydrolysis of the N-linked glycan from the Fc region of host immunoglobulin-gamma (IgG) during infection. Specifically catalyzes the hydrolysis of the beta-1,4 linkage between the first two N-acetylglucosamine residues of the complex-type N-linked glycan located on 'Asn-297' of the Fc region of IgG antibodies (IGHG1, IGHG2, IGHG3 or IGHG4), thereby preventing interaction between IgGs and Fc receptors and ability to activate the complement pathway. Shows a specificity for biantennary complex type N-glycans; does neither cleave larger complex type glycans nor oligomannose and nor hybrid-type glycans. Specifically acts on IgGs; does not act on immunoglobulin alpha, beta, delta or mu. The sequence is that of Endo-beta-N-acetylglucosaminidase EndoSd from Streptococcus dysgalactiae.